Here is a 388-residue protein sequence, read N- to C-terminus: Formate-dependent phosphoribosylglycinamide formyltransferase (388 aa).

N(1)-(5-phospho-beta-D-ribosyl)glycinamide contacts are provided by residues 20–21 and Glu80; that span reads EL. Residues Arg112, Lys153, 158-163, 193-196, and Glu201 contribute to the ATP site; these read SSGKGQ and EEFV. The ATP-grasp domain occupies 117 to 306; sequence RLASEKLGLR…EFEIHVRSIL (190 aa). Residues Glu265 and Glu277 each coordinate Mg(2+). N(1)-(5-phospho-beta-D-ribosyl)glycinamide is bound by residues Asp284, Lys352, and 359 to 360; that span reads RR.

It belongs to the PurK/PurT family. In terms of assembly, homodimer.

The enzyme catalyses N(1)-(5-phospho-beta-D-ribosyl)glycinamide + formate + ATP = N(2)-formyl-N(1)-(5-phospho-beta-D-ribosyl)glycinamide + ADP + phosphate + H(+). The protein operates within purine metabolism; IMP biosynthesis via de novo pathway; N(2)-formyl-N(1)-(5-phospho-D-ribosyl)glycinamide from N(1)-(5-phospho-D-ribosyl)glycinamide (formate route): step 1/1. Its function is as follows. Involved in the de novo purine biosynthesis. Catalyzes the transfer of formate to 5-phospho-ribosyl-glycinamide (GAR), producing 5-phospho-ribosyl-N-formylglycinamide (FGAR). Formate is provided by PurU via hydrolysis of 10-formyl-tetrahydrofolate. The protein is Formate-dependent phosphoribosylglycinamide formyltransferase of Methanococcus vannielii (strain ATCC 35089 / DSM 1224 / JCM 13029 / OCM 148 / SB).